The primary structure comprises 132 residues: Putative RNase AF_0947 (132 aa).

Active-site residues include arginine 91 and histidine 96. The RX(4)HXY motif signature appears at 91–98 (RNAIAHHY). O-di-AMP-tyrosine is present on tyrosine 98.

It belongs to the HepT RNase toxin family. As to quaternary structure, homodimer, probably forms a complex with cognate antitoxin AF_0948. Post-translationally, modified by cognate antitoxin AF_0948; probably at least 2 successive AMPylation events occur on Tyr-98.

In terms of biological role, probable toxic component of a putative type VII toxin-antitoxin (TA) system, probably an RNase. Probably neutralized by cognate antitoxin AF_0948. Neutralization may be due to AMPylation by AF_0948. The polypeptide is Putative RNase AF_0947 (Archaeoglobus fulgidus (strain ATCC 49558 / DSM 4304 / JCM 9628 / NBRC 100126 / VC-16)).